Consider the following 86-residue polypeptide: Small ribosomal subunit protein uS17 (86 aa).

It belongs to the universal ribosomal protein uS17 family. In terms of assembly, part of the 30S ribosomal subunit.

Its function is as follows. One of the primary rRNA binding proteins, it binds specifically to the 5'-end of 16S ribosomal RNA. This chain is Small ribosomal subunit protein uS17, found in Caldicellulosiruptor bescii (strain ATCC BAA-1888 / DSM 6725 / KCTC 15123 / Z-1320) (Anaerocellum thermophilum).